The following is a 481-amino-acid chain: Cysteine protease atg-4.1 (481 aa).

Residue cysteine 112 is the Nucleophile of the active site. Residues aspartate 313 and histidine 315 contribute to the active site. The segment at 462–481 (DVHTEEEDADEDNDDDVANA) is disordered.

The protein belongs to the peptidase C54 family.

The protein localises to the cytoplasm. It carries out the reaction [protein]-C-terminal L-amino acid-glycyl-phosphatidylethanolamide + H2O = [protein]-C-terminal L-amino acid-glycine + a 1,2-diacyl-sn-glycero-3-phosphoethanolamine. Cysteine protease required for autophagy. Cleaves the C-terminal amino acid of ATG8 family proteins lgg-1, to reveal a C-terminal glycine. Exposure of the glycine at the C-terminus is essential for ATG8 proteins conjugation to phosphatidylethanolamine (PE) and insertion to membranes, which is necessary for autophagy. Its cleavage activity is functionally redundant to atg-4.2, but it cleaves lgg-1 precursors more efficiently than atg-4.2. Acts redundantly with atg-4.2 to promote the lgg-1 delipidation to release the protein from membranes, which facilitates multiple events during macroautophagy. Unlike atg-4.2 does not seem to be required for autophagosome maturation. This chain is Cysteine protease atg-4.1, found in Caenorhabditis elegans.